The primary structure comprises 379 residues: Queuine tRNA-ribosyltransferase (379 aa).

D94 functions as the Proton acceptor in the catalytic mechanism. Residues 94-98, D148, Q191, and G218 contribute to the substrate site; that span reads DSGGF. The RNA binding stretch occupies residues 249–255; sequence GVGSPDS. The active-site Nucleophile is the D268. Residues 273 to 277 form an RNA binding; important for wobble base 34 recognition region; it reads TRIAR. Zn(2+) is bound by residues C306, C308, C311, and H337.

This sequence belongs to the queuine tRNA-ribosyltransferase family. As to quaternary structure, homodimer. Within each dimer, one monomer is responsible for RNA recognition and catalysis, while the other monomer binds to the replacement base PreQ1. Requires Zn(2+) as cofactor.

The enzyme catalyses 7-aminomethyl-7-carbaguanine + guanosine(34) in tRNA = 7-aminomethyl-7-carbaguanosine(34) in tRNA + guanine. The protein operates within tRNA modification; tRNA-queuosine biosynthesis. Catalyzes the base-exchange of a guanine (G) residue with the queuine precursor 7-aminomethyl-7-deazaguanine (PreQ1) at position 34 (anticodon wobble position) in tRNAs with GU(N) anticodons (tRNA-Asp, -Asn, -His and -Tyr). Catalysis occurs through a double-displacement mechanism. The nucleophile active site attacks the C1' of nucleotide 34 to detach the guanine base from the RNA, forming a covalent enzyme-RNA intermediate. The proton acceptor active site deprotonates the incoming PreQ1, allowing a nucleophilic attack on the C1' of the ribose to form the product. After dissociation, two additional enzymatic reactions on the tRNA convert PreQ1 to queuine (Q), resulting in the hypermodified nucleoside queuosine (7-(((4,5-cis-dihydroxy-2-cyclopenten-1-yl)amino)methyl)-7-deazaguanosine). The chain is Queuine tRNA-ribosyltransferase from Listeria innocua serovar 6a (strain ATCC BAA-680 / CLIP 11262).